Here is an 898-residue protein sequence, read N- to C-terminus: Putative aconitate hydratase, cytoplasmic (898 aa).

Substrate is bound by residues Gln-90 and 209–211 (DSH). [4Fe-4S] cluster-binding residues include Cys-441, Cys-507, and Cys-510. Residues Arg-540, Arg-545, Arg-703, and 784–785 (SR) each bind substrate.

The protein belongs to the aconitase/IPM isomerase family. Requires [4Fe-4S] cluster as cofactor.

It is found in the cytoplasm. The catalysed reaction is citrate = D-threo-isocitrate. The protein operates within carbohydrate metabolism; glyoxylate and dicarboxylate metabolism. Catalyzes the isomerization of citrate to isocitrate via cis-aconitate. The sequence is that of Putative aconitate hydratase, cytoplasmic from Oryza sativa subsp. japonica (Rice).